Consider the following 378-residue polypeptide: WUSCHEL-related homeobox 9 (378 aa).

2 disordered regions span residues 1–60 and 123–173; these read MASS…NPKP and KHSL…GSQM. A compositionally biased stretch (low complexity) spans 32–42; the sequence is SASHRSSPFSS. Over residues 45–54 the composition is skewed to basic and acidic residues; the sequence is EVERSPEPKP. The segment at residues 51 to 115 is a DNA-binding region (homeobox; WUS-type); the sequence is EPKPRWNPKP…NRKSRSKHKL (65 aa). 2 stretches are compositionally biased toward low complexity: residues 137 to 152 and 161 to 171; these read PSAS…SSKS and KNNTNLSLGGS.

Belongs to the WUS homeobox family. Expressed in the basal cell and later at the boundary between suspensor and proembryo. Expressed at low levels in proliferating tissues post embryonically. Detected in vegetative shoot apical meristem, leaf primordia, floral meristems, emerging floral organs, epidermal layer of the placenta and in the upper portion of the root meristematic zone.

The protein resides in the nucleus. The protein localises to the cytoplasm. Functionally, homeodomain transcription factor required for meristem growth and early development. Promotes cell proliferation and prevents premature differentiation in meristematic tissues during postembryonic development. Essential for maintaining tissue growth during embryogenesis. May act by repressing TSS to promote meristematic proliferation. Involved in the transcriptional activation of a subset of cytokinin response factors. May act as a negative regulator of cytokinin signaling in the dark. This is WUSCHEL-related homeobox 9 from Arabidopsis thaliana (Mouse-ear cress).